Reading from the N-terminus, the 606-residue chain is Probable methyltransferase PMT5 (606 aa).

The Cytoplasmic segment spans residues 1-20 (MRGSWYKSVSSVFGLRPRIR). The helical; Signal-anchor for type II membrane protein transmembrane segment at 21–41 (GLLFFIVGVVALVTILAPLTS) threads the bilayer. The Lumenal portion of the chain corresponds to 42–606 (NSYDSSSSST…LVCQKPFIKK (565 aa)). N-linked (GlcNAc...) asparagine glycans are attached at residues asparagine 101 and asparagine 409.

It belongs to the methyltransferase superfamily.

The protein localises to the endoplasmic reticulum membrane. The chain is Probable methyltransferase PMT5 from Arabidopsis thaliana (Mouse-ear cress).